Reading from the N-terminus, the 544-residue chain is Nucleosome assembly protein 1-like 3 (544 aa).

Disordered stretches follow at residues 1–109 (MAEA…LFLD) and 168–345 (PTEE…KKED). Over residues 35–83 (SNSSSSTNSCSSSGSSSSGSSSSSSSSSSSSSSSSSSSSGSSGSSSNGS) the composition is skewed to low complexity. Residues 168 to 192 (PTEEECEWNSEEEFSGDEEMQDDTP) are compositionally biased toward acidic residues. Basic and acidic residues-rich tracts occupy residues 207 to 228 (CNEKAEVKEEGTHVPEEVPEAK), 235 to 277 (PKET…KADS), and 314 to 332 (PAREAQKRVPETRPEEGVN).

The protein belongs to the nucleosome assembly protein (NAP) family. In terms of tissue distribution, expressed in brain.

The protein resides in the nucleus. It is found in the cytoplasm. This is Nucleosome assembly protein 1-like 3 (Nap1l3) from Mus musculus (Mouse).